Consider the following 465-residue polypeptide: ATP-dependent RNA helicase ddx19 (465 aa).

Over residues 1 to 20 (MSEKETNTTSTENKEKEKQE) the composition is skewed to basic and acidic residues. Residues 1–45 (MSEKETNTTSTENKEKEKQEQTNTNSTTESTNNQVDEEYERPGRS) are disordered. The segment covering 21–34 (QTNTNSTTESTNNQ) has biased composition (low complexity). The Q motif signature appears at 70-98 (KTFEELGLKPELLKGVYAMGYNKPSKIQE). The Helicase ATP-binding domain maps to 102-268 (PIIIQSPNNL…KKIVQDPYTS (167 aa)). Residue 115 to 122 (SQSGTGKT) coordinates ATP. The short motif at 215-218 (DEAD) is the DEAD box element. The Helicase C-terminal domain occupies 297 to 449 (ILSDIYGFIS…ELKSSEIESL (153 aa)).

The protein belongs to the DEAD box helicase family. DDX19/DBP5 subfamily.

The catalysed reaction is ATP + H2O = ADP + phosphate + H(+). Its function is as follows. ATP-binding RNA helicase required for normal differentiation and development. In Dictyostelium discoideum (Social amoeba), this protein is ATP-dependent RNA helicase ddx19 (helC).